The following is a 639-amino-acid chain: Chaperone protein DnaK (639 aa).

At Thr198 the chain carries Phosphothreonine; by autocatalysis. The interval 604-639 (KSQAQGGDNADAGKQANAAADDVVDAEFEEVKDDKK) is disordered. Over residues 606–624 (QAQGGDNADAGKQANAAAD) the composition is skewed to low complexity. A compositionally biased stretch (acidic residues) spans 625–639 (DVVDAEFEEVKDDKK).

Belongs to the heat shock protein 70 family.

Its function is as follows. Acts as a chaperone. In Shewanella baltica (strain OS223), this protein is Chaperone protein DnaK.